Here is a 379-residue protein sequence, read N- to C-terminus: Homoserine O-succinyltransferase (379 aa).

The AB hydrolase-1 domain occupies 48-357; sequence NAVLICHALS…SAHGHDAFLM (310 aa). Catalysis depends on Ser-154, which acts as the Nucleophile. Arg-224 contacts substrate. Residues Asp-319 and His-352 contribute to the active site. Asp-353 contacts substrate.

It belongs to the AB hydrolase superfamily. MetX family. As to quaternary structure, homodimer.

The protein localises to the cytoplasm. It catalyses the reaction L-homoserine + succinyl-CoA = O-succinyl-L-homoserine + CoA. Its pathway is amino-acid biosynthesis; L-methionine biosynthesis via de novo pathway; O-succinyl-L-homoserine from L-homoserine: step 1/1. Functionally, transfers a succinyl group from succinyl-CoA to L-homoserine, forming succinyl-L-homoserine. This Neisseria gonorrhoeae (strain ATCC 700825 / FA 1090) protein is Homoserine O-succinyltransferase.